Consider the following 110-residue polypeptide: UPF0060 membrane protein Rpal_4363 (110 aa).

The next 4 helical transmembrane spans lie at 4–24 (LLTFCAAALMEITGCFAFWAW), 31–51 (PLWLIPGMLALALFAYLLTLA), 59–79 (AYAAYGGIYIASALLWGWAIE), and 88–108 (VIGAAICLVGMSVILFGPRAL).

This sequence belongs to the UPF0060 family.

It localises to the cell inner membrane. In Rhodopseudomonas palustris (strain TIE-1), this protein is UPF0060 membrane protein Rpal_4363.